A 462-amino-acid chain; its full sequence is UDP-N-acetylmuramoylalanine--D-glutamate ligase (462 aa).

An ATP-binding site is contributed by 111-117 (GTNGKTT).

It belongs to the MurCDEF family.

Its subcellular location is the cytoplasm. The enzyme catalyses UDP-N-acetyl-alpha-D-muramoyl-L-alanine + D-glutamate + ATP = UDP-N-acetyl-alpha-D-muramoyl-L-alanyl-D-glutamate + ADP + phosphate + H(+). It functions in the pathway cell wall biogenesis; peptidoglycan biosynthesis. Functionally, cell wall formation. Catalyzes the addition of glutamate to the nucleotide precursor UDP-N-acetylmuramoyl-L-alanine (UMA). This is UDP-N-acetylmuramoylalanine--D-glutamate ligase from Trichodesmium erythraeum (strain IMS101).